A 436-amino-acid polypeptide reads, in one-letter code: Ribosomal protein uS12 methylthiotransferase RimO (436 aa).

An MTTase N-terminal domain is found at 2-117; it reads RNVGIISLGC…IVDVIEEVKK (116 aa). [4Fe-4S] cluster-binding residues include C11, C47, C80, C154, C158, and C161. A Radical SAM core domain is found at 140–369; it reads TTPPYYAYLK…MEIQKQISYE (230 aa). The TRAM domain maps to 372-436; that stretch reads MSKIGTKLEV…AFEYDLVGEY (65 aa).

Belongs to the methylthiotransferase family. RimO subfamily. [4Fe-4S] cluster is required as a cofactor.

It is found in the cytoplasm. It catalyses the reaction L-aspartate(89)-[ribosomal protein uS12]-hydrogen + (sulfur carrier)-SH + AH2 + 2 S-adenosyl-L-methionine = 3-methylsulfanyl-L-aspartate(89)-[ribosomal protein uS12]-hydrogen + (sulfur carrier)-H + 5'-deoxyadenosine + L-methionine + A + S-adenosyl-L-homocysteine + 2 H(+). Catalyzes the methylthiolation of an aspartic acid residue of ribosomal protein uS12. The polypeptide is Ribosomal protein uS12 methylthiotransferase RimO (Caldanaerobacter subterraneus subsp. tengcongensis (strain DSM 15242 / JCM 11007 / NBRC 100824 / MB4) (Thermoanaerobacter tengcongensis)).